The primary structure comprises 435 residues: Glutamate-1-semialdehyde 2,1-aminomutase (435 aa).

Lysine 266 is modified (N6-(pyridoxal phosphate)lysine).

It belongs to the class-III pyridoxal-phosphate-dependent aminotransferase family. HemL subfamily. In terms of assembly, homodimer. Requires pyridoxal 5'-phosphate as cofactor.

The protein resides in the cytoplasm. It carries out the reaction (S)-4-amino-5-oxopentanoate = 5-aminolevulinate. Its pathway is porphyrin-containing compound metabolism; protoporphyrin-IX biosynthesis; 5-aminolevulinate from L-glutamyl-tRNA(Glu): step 2/2. This chain is Glutamate-1-semialdehyde 2,1-aminomutase, found in Coxiella burnetii (strain RSA 331 / Henzerling II).